A 1081-amino-acid chain; its full sequence is Zinc finger protein 827 (1081 aa).

The segment covering 1–10 (MPRRKQEQPK) has biased composition (basic and acidic residues). The mediates direct interaction with RBBP4 stretch occupies residues 1-14 (MPRRKQEQPKRLPS). The segment at 1–77 (MPRRKQEQPK…DTSLGSTTPS (77 aa)) is disordered. An RRK motif; mediates NuRD recruitment to telomeres motif is present at residues 3 to 5 (RRK). Residues 62–77 (EQSTSPDTSLGSTTPS) show a composition bias toward polar residues. Residues Lys-176, Lys-216, and Lys-226 each participate in a glycyl lysine isopeptide (Lys-Gly) (interchain with G-Cter in SUMO2) cross-link. Disordered regions lie at residues 259–278 (KVSERSLTPGQEHPPPASSF) and 307–348 (SSLL…SLEL). Residues 327–344 (VTPPPPPPPPPPPPPPPQ) show a composition bias toward pro residues. Glycyl lysine isopeptide (Lys-Gly) (interchain with G-Cter in SUMO2) cross-links involve residues Lys-360 and Lys-372. 3 consecutive C2H2-type zinc fingers follow at residues 374 to 396 (FQCPICGLVIKRKSYWKRHMVIH), 402 to 424 (HQCPLCPFRCARKDNLKSHMKVH), and 433 to 455 (FQCQLCPFTSSRHFSLKLHMRCH). Glycyl lysine isopeptide (Lys-Gly) (interchain with G-Cter in SUMO2) cross-links involve residues Lys-466, Lys-475, Lys-523, Lys-549, Lys-580, Lys-587, Lys-597, Lys-634, Lys-639, and Lys-658. Lys-673 participates in a covalent cross-link: Glycyl lysine isopeptide (Lys-Gly) (interchain with G-Cter in SUMO1); alternate. Lys-673 participates in a covalent cross-link: Glycyl lysine isopeptide (Lys-Gly) (interchain with G-Cter in SUMO2); alternate. Residues Lys-704, Lys-710, Lys-742, Lys-778, and Lys-798 each participate in a glycyl lysine isopeptide (Lys-Gly) (interchain with G-Cter in SUMO2) cross-link. 2 consecutive C2H2-type zinc fingers follow at residues 817-839 (FPCDVCGKVFGRQQTLSRHLSLH) and 845-867 (YKCHLCPYAAKCRANLNQHLTVH). Residues Lys-870 and Lys-891 each participate in a glycyl lysine isopeptide (Lys-Gly) (interchain with G-Cter in SUMO2) cross-link. C2H2-type zinc fingers lie at residues 897 to 919 (YSCHVCGFETELNVQFVSHMSLH) and 929 to 952 (ICCTACDFVTMEEAEIKTHIGTKH). Residues 947-960 (HIGTKHTGEDRKTP) show a composition bias toward basic and acidic residues. The tract at residues 947–996 (HIGTKHTGEDRKTPSESNSPSSSSLSALSDSANSKDDSDGSQKNKGGNNL) is disordered. A Glycyl lysine isopeptide (Lys-Gly) (interchain with G-Cter in SUMO2) cross-link involves residue Lys-958. Residues 961-978 (SESNSPSSSSLSALSDSA) are compositionally biased toward low complexity. Residues 979-988 (NSKDDSDGSQ) are compositionally biased toward basic and acidic residues. Lys-1014 is covalently cross-linked (Glycyl lysine isopeptide (Lys-Gly) (interchain with G-Cter in SUMO2)). 2 consecutive C2H2-type zinc fingers follow at residues 1019–1041 (FECVFCNFVCKTKNMFERHLQIH) and 1047–1069 (FECDVCHKFMKTPEQLLEHKKCH).

Belongs to the krueppel C2H2-type zinc-finger protein family. As to quaternary structure, part of a transcription inhibitory ribonucleoprotein complex composed at least of the circular RNA circZNF827, HNRNPK and HNRNPL. Interacts with the nucleosome remodeling and histone deacetylase/NuRD complex. Interacts with RBBP4; the interaction is direct and recruits RBBP4, a component of the NuRD complex, to telomeres.

Its subcellular location is the nucleus. It is found in the chromosome. The protein localises to the telomere. As part of a ribonucleoprotein complex composed at least of HNRNPK, HNRNPL and the circular RNA circZNF827 that nucleates the complex on chromatin, may negatively regulate the transcription of genes involved in neuronal differentiation. Could also recruit the nucleosome remodeling and histone deacetylase/NuRD complex to telomeric regions of chromosomes to regulate chromatin remodeling as part of telomere maintenance. In Homo sapiens (Human), this protein is Zinc finger protein 827 (ZNF827).